We begin with the raw amino-acid sequence, 93 residues long: Cobalt transport protein CbiN (93 aa).

The next 2 membrane-spanning stretches (helical) occupy residues 5 to 25 (LILLAMVVALMILPFFINHGG) and 63 to 83 (LLFTLQGSLGAAVIFYILGYA).

The protein belongs to the CbiN family. Forms an energy-coupling factor (ECF) transporter complex composed of an ATP-binding protein (A component, CbiO), a transmembrane protein (T component, CbiQ) and 2 possible substrate-capture proteins (S components, CbiM and CbiN) of unknown stoichimetry.

The protein localises to the cell inner membrane. The protein operates within cofactor biosynthesis; adenosylcobalamin biosynthesis. In terms of biological role, part of the energy-coupling factor (ECF) transporter complex CbiMNOQ involved in cobalt import. The chain is Cobalt transport protein CbiN from Klebsiella pneumoniae (strain 342).